A 256-amino-acid chain; its full sequence is Ubiquinone/menaquinone biosynthesis C-methyltransferase UbiE (256 aa).

S-adenosyl-L-methionine contacts are provided by residues Thr79, Asp100, and 128–129; that span reads DA.

This sequence belongs to the class I-like SAM-binding methyltransferase superfamily. MenG/UbiE family.

It carries out the reaction a 2-demethylmenaquinol + S-adenosyl-L-methionine = a menaquinol + S-adenosyl-L-homocysteine + H(+). The enzyme catalyses a 2-methoxy-6-(all-trans-polyprenyl)benzene-1,4-diol + S-adenosyl-L-methionine = a 5-methoxy-2-methyl-3-(all-trans-polyprenyl)benzene-1,4-diol + S-adenosyl-L-homocysteine + H(+). The protein operates within quinol/quinone metabolism; menaquinone biosynthesis; menaquinol from 1,4-dihydroxy-2-naphthoate: step 2/2. It participates in cofactor biosynthesis; ubiquinone biosynthesis. In terms of biological role, methyltransferase required for the conversion of demethylmenaquinol (DMKH2) to menaquinol (MKH2) and the conversion of 2-polyprenyl-6-methoxy-1,4-benzoquinol (DDMQH2) to 2-polyprenyl-3-methyl-6-methoxy-1,4-benzoquinol (DMQH2). The protein is Ubiquinone/menaquinone biosynthesis C-methyltransferase UbiE of Pseudomonas paraeruginosa (strain DSM 24068 / PA7) (Pseudomonas aeruginosa (strain PA7)).